Here is a 474-residue protein sequence, read N- to C-terminus: ATP synthase subunit beta (474 aa).

151 to 158 is a binding site for ATP; that stretch reads GGAGVGKT.

This sequence belongs to the ATPase alpha/beta chains family. As to quaternary structure, F-type ATPases have 2 components, CF(1) - the catalytic core - and CF(0) - the membrane proton channel. CF(1) has five subunits: alpha(3), beta(3), gamma(1), delta(1), epsilon(1). CF(0) has four main subunits: a(1), b(1), b'(1) and c(9-12).

The protein resides in the cell inner membrane. The catalysed reaction is ATP + H2O + 4 H(+)(in) = ADP + phosphate + 5 H(+)(out). In terms of biological role, produces ATP from ADP in the presence of a proton gradient across the membrane. The catalytic sites are hosted primarily by the beta subunits. The polypeptide is ATP synthase subunit beta (Roseobacter denitrificans (strain ATCC 33942 / OCh 114) (Erythrobacter sp. (strain OCh 114))).